A 284-amino-acid chain; its full sequence is 2-dehydro-3-deoxyphosphooctonate aldolase (284 aa).

It belongs to the KdsA family.

Its subcellular location is the cytoplasm. The enzyme catalyses D-arabinose 5-phosphate + phosphoenolpyruvate + H2O = 3-deoxy-alpha-D-manno-2-octulosonate-8-phosphate + phosphate. Its pathway is carbohydrate biosynthesis; 3-deoxy-D-manno-octulosonate biosynthesis; 3-deoxy-D-manno-octulosonate from D-ribulose 5-phosphate: step 2/3. The protein operates within bacterial outer membrane biogenesis; lipopolysaccharide biosynthesis. The polypeptide is 2-dehydro-3-deoxyphosphooctonate aldolase (Escherichia fergusonii (strain ATCC 35469 / DSM 13698 / CCUG 18766 / IAM 14443 / JCM 21226 / LMG 7866 / NBRC 102419 / NCTC 12128 / CDC 0568-73)).